The sequence spans 98 residues: Large ribosomal subunit protein uL23 (98 aa).

This sequence belongs to the universal ribosomal protein uL23 family. In terms of assembly, part of the 50S ribosomal subunit. Contacts protein L29, and trigger factor when it is bound to the ribosome.

Its function is as follows. One of the early assembly proteins it binds 23S rRNA. One of the proteins that surrounds the polypeptide exit tunnel on the outside of the ribosome. Forms the main docking site for trigger factor binding to the ribosome. This Caulobacter sp. (strain K31) protein is Large ribosomal subunit protein uL23.